Here is a 1029-residue protein sequence, read N- to C-terminus: Protein translocase subunit SecA (1029 aa).

ATP contacts are provided by residues Q143, 161–165 (GEGKT), and D661. The tract at residues 953–1029 (EQEQKKSQVQ…GKKYKNCCGK (77 aa)) is disordered. Basic and acidic residues-rich tracts occupy residues 966 to 975 (LVARHEKAET) and 984 to 996 (PEGR…ENGK). Zn(2+) is bound by residues C1015, C1017, C1026, and C1027.

The protein belongs to the SecA family. In terms of assembly, monomer and homodimer. Part of the essential Sec protein translocation apparatus which comprises SecA, SecYEG and auxiliary proteins SecDF. Other proteins may also be involved. Requires Zn(2+) as cofactor.

It localises to the cell inner membrane. Its subcellular location is the cytoplasm. It carries out the reaction ATP + H2O + cellular proteinSide 1 = ADP + phosphate + cellular proteinSide 2.. Its function is as follows. Part of the Sec protein translocase complex. Interacts with the SecYEG preprotein conducting channel. Has a central role in coupling the hydrolysis of ATP to the transfer of proteins into and across the cell membrane, serving as an ATP-driven molecular motor driving the stepwise translocation of polypeptide chains across the membrane. The chain is Protein translocase subunit SecA from Chlorobium phaeobacteroides (strain BS1).